The chain runs to 155 residues: 3-hydroxyacyl-[acyl-carrier-protein] dehydratase FabZ (155 aa).

His-57 is a catalytic residue.

It belongs to the thioester dehydratase family. FabZ subfamily.

The protein localises to the cytoplasm. The catalysed reaction is a (3R)-hydroxyacyl-[ACP] = a (2E)-enoyl-[ACP] + H2O. Its function is as follows. Involved in unsaturated fatty acids biosynthesis. Catalyzes the dehydration of short chain beta-hydroxyacyl-ACPs and long chain saturated and unsaturated beta-hydroxyacyl-ACPs. This chain is 3-hydroxyacyl-[acyl-carrier-protein] dehydratase FabZ, found in Sorangium cellulosum (strain So ce56) (Polyangium cellulosum (strain So ce56)).